A 477-amino-acid chain; its full sequence is Bifunctional protein HldE (477 aa).

Residues Met1–Thr318 form a ribokinase region. An N6-acetyllysine modification is found at Lys179. Asn195 to Glu198 is a binding site for ATP. Residue Asp264 is part of the active site. A cytidylyltransferase region spans residues Met344 to Gly477.

It in the N-terminal section; belongs to the carbohydrate kinase PfkB family. This sequence in the C-terminal section; belongs to the cytidylyltransferase family. In terms of assembly, homodimer.

It catalyses the reaction D-glycero-beta-D-manno-heptose 7-phosphate + ATP = D-glycero-beta-D-manno-heptose 1,7-bisphosphate + ADP + H(+). The catalysed reaction is D-glycero-beta-D-manno-heptose 1-phosphate + ATP + H(+) = ADP-D-glycero-beta-D-manno-heptose + diphosphate. Its pathway is nucleotide-sugar biosynthesis; ADP-L-glycero-beta-D-manno-heptose biosynthesis; ADP-L-glycero-beta-D-manno-heptose from D-glycero-beta-D-manno-heptose 7-phosphate: step 1/4. The protein operates within nucleotide-sugar biosynthesis; ADP-L-glycero-beta-D-manno-heptose biosynthesis; ADP-L-glycero-beta-D-manno-heptose from D-glycero-beta-D-manno-heptose 7-phosphate: step 3/4. Functionally, catalyzes the phosphorylation of D-glycero-D-manno-heptose 7-phosphate at the C-1 position to selectively form D-glycero-beta-D-manno-heptose-1,7-bisphosphate. Its function is as follows. Catalyzes the ADP transfer from ATP to D-glycero-beta-D-manno-heptose 1-phosphate, yielding ADP-D-glycero-beta-D-manno-heptose. The chain is Bifunctional protein HldE from Shigella sonnei (strain Ss046).